The primary structure comprises 114 residues: uncharacterized protein (114 aa).

In terms of domain architecture, HIT spans 6–114 (IFKNIIQRKI…LGGKKLKSFS (109 aa)).

This is an uncharacterized protein from Buchnera aphidicola subsp. Acyrthosiphon pisum (strain APS) (Acyrthosiphon pisum symbiotic bacterium).